A 454-amino-acid chain; its full sequence is Kynurenine--oxoglutarate transaminase 3 (454 aa).

Phe-2 is subject to N-acetylserine. Substrate is bound at residue Gly-71. The residue at position 116 (Lys-116) is an N6-acetyllysine; alternate. Lys-116 carries the N6-succinyllysine; alternate modification. Residue Asn-218 coordinates substrate. N6-(pyridoxal phosphate)lysine is present on Lys-280. Arg-429 contacts substrate.

The protein belongs to the class-I pyridoxal-phosphate-dependent aminotransferase family. Homodimer. Requires pyridoxal 5'-phosphate as cofactor.

It catalyses the reaction L-kynurenine + 2-oxoglutarate = kynurenate + L-glutamate + H2O. The catalysed reaction is L-kynurenine + glyoxylate = kynurenate + glycine + H2O. The enzyme catalyses 3-hydroxy-L-kynurenine + glyoxylate = xanthurenate + glycine + H2O. It carries out the reaction an S-substituted L-cysteine + H2O = a thiol + pyruvate + NH4(+). The protein operates within amino-acid degradation; L-kynurenine degradation; kynurenate from L-kynurenine: step 1/2. Catalyzes the irreversible transamination of the L-tryptophan metabolite L-kynurenine to form kynurenic acid (KA), an intermediate in the tryptophan catabolic pathway which is also a broad spectrum antagonist of the three ionotropic excitatory amino acid receptors among others. May catalyze the beta-elimination of S-conjugates and Se-conjugates of L-(seleno)cysteine, resulting in the cleavage of the C-S or C-Se bond. Has transaminase activity towards L-kynurenine, tryptophan, phenylalanine, serine, cysteine, methionine, histidine, glutamine and asparagine with glyoxylate as an amino group acceptor (in vitro). Has lower activity with 2-oxoglutarate as amino group acceptor (in vitro). This is Kynurenine--oxoglutarate transaminase 3 from Homo sapiens (Human).